The primary structure comprises 342 residues: MGSWTSDPAPPMAEVFNSAVAAVAIGAAWEVGLLDAVKDQKKVDVFQFAAENDLDRPSVQGLVAALAVVQVVALEQNTVVAGRQLEEAYRTKSLFHWLCLGSGGLFSRMQYVLRNEHRTGDFHRRDPAAIAHACHDINKQYFDPAFWAAMDGLDYPVQSVVDLGCGSGQRLMQILDRHPQASAIGIDVAGPAIQVAARDAVARGFGNRLVFREGDAREVSYRDEFEHVDLLTCFMMGHDFWPRDKCIATLQRLRRVFPAARRLLLGDATRILLDTPGGQQAVRNGTVPIFTLGFEVGHAMMGVYLPTIDEWEGVFAEGGWRCVKKHLIESLSLSVVFELEHA.

Belongs to the methyltransferase superfamily.

It participates in secondary metabolite biosynthesis. In terms of biological role, methyltransferase; part of the gene cluster that mediates the biosynthesis of the unguisins, gamma-aminobutyric acid (GABA)-containing fungal cyclic heptapeptides with the amino acid sequence cyclo-(D-Ala1-D-Val2-L-Leu3-beta-MePhe4-D-Ala5-D-Trp6-GABA7) for unguisin H and cyclo-(D-Ala1-D-Ala2-L-Leu3-beta-MePhe4-D-Ala5-D-Trp6-GABA7) for unguisin I. Within the pathway, the methyltransferase ungE' is probably involved in the synthesis of the (2R,3R)-beta-methylphenylalanine residue incorporated by the module 4 of the nonribosomal peptide synthetase (NRPS) ungA'. The alanine racemase ungC' catalyzes the interconversion of L-alanine and D-alanine, providing the D-alanine which is accepted by the first adenylation domain of ungA'. UngA' is the main enzyme within the cluster which condenses the 7 residues using its respective 7 modules. The terminal condensation domain (Ct) is involved in cyclization with D-alanine and thereby releasing of unguisins H and I. Finally, the hydrolase ungD' catalyzes the hydrolysis between the D-tryptophan and GABA residues of unguisins H and I to produce the corresponding linear peptides. This is Methyltransferase ungE' from Aspergillus campestris (strain IBT 28561).